A 455-amino-acid polypeptide reads, in one-letter code: Keratin, type I cuticular Ha5 (455 aa).

The segment at 1-97 (MASKCLKASF…FGEGILTGNE (97 aa)) is head. One can recognise an IF rod domain in the interval 97–408 (EKETMQSLND…GLLESEDSKL (312 aa)). The interval 98 to 132 (KETMQSLNDRLASYLEKVRQLEQENASLESRIREW) is coil 1A. The tract at residues 133-143 (CEQQVPYMCPD) is linker 1. The segment at 144–244 (YQSYFRTMEE…HEEEVNSLRC (101 aa)) is coil 1B. Residues 245-260 (QLGDRLNVEVDAAPPV) form a linker 12 region. The segment at 261–404 (DLNRVLDEMR…NTYRGLLESE (144 aa)) is coil 2. The segment at 405 to 455 (DSKLPCNPCAPDYSSSKSCLPCLPAVSCSTGAARTTCSPRPVCVPCPGGRF) is tail.

The protein belongs to the intermediate filament family.

The chain is Keratin, type I cuticular Ha5 from Mus musculus (Mouse).